Consider the following 877-residue polypeptide: DNA mismatch repair protein MutS (877 aa).

Residue 627 to 634 (GPNMAGKS) participates in ATP binding.

The protein belongs to the DNA mismatch repair MutS family.

This protein is involved in the repair of mismatches in DNA. It is possible that it carries out the mismatch recognition step. This protein has a weak ATPase activity. The protein is DNA mismatch repair protein MutS of Dinoroseobacter shibae (strain DSM 16493 / NCIMB 14021 / DFL 12).